Consider the following 329-residue polypeptide: DNA-directed RNA polymerase subunit alpha (329 aa).

An alpha N-terminal domain (alpha-NTD) region spans residues 1 to 235; sequence MQGSVTEFLK…EQLDAFVDLR (235 aa). The alpha C-terminal domain (alpha-CTD) stretch occupies residues 249–329; it reads FDPILLRPVD…NWPPASIAED (81 aa).

Belongs to the RNA polymerase alpha chain family. In terms of assembly, homodimer. The RNAP catalytic core consists of 2 alpha, 1 beta, 1 beta' and 1 omega subunit. When a sigma factor is associated with the core the holoenzyme is formed, which can initiate transcription.

The enzyme catalyses RNA(n) + a ribonucleoside 5'-triphosphate = RNA(n+1) + diphosphate. Its function is as follows. DNA-dependent RNA polymerase catalyzes the transcription of DNA into RNA using the four ribonucleoside triphosphates as substrates. This chain is DNA-directed RNA polymerase subunit alpha, found in Photobacterium profundum (strain SS9).